The sequence spans 332 residues: Delta-aminolevulinic acid dehydratase (332 aa).

The active-site Schiff-base intermediate with substrate is the Lys202. Residues Arg212 and Lys225 each contribute to the 5-aminolevulinate site. Lys256 (schiff-base intermediate with substrate) is an active-site residue. 5-aminolevulinate-binding residues include Ser282 and Tyr321.

Belongs to the ALAD family. As to quaternary structure, homohexamer.

It catalyses the reaction 2 5-aminolevulinate = porphobilinogen + 2 H2O + H(+). It participates in porphyrin-containing compound metabolism; protoporphyrin-IX biosynthesis; coproporphyrinogen-III from 5-aminolevulinate: step 1/4. Catalyzes an early step in the biosynthesis of tetrapyrroles. Binds two molecules of 5-aminolevulinate per subunit, each at a distinct site, and catalyzes their condensation to form porphobilinogen. The chain is Delta-aminolevulinic acid dehydratase (hemB) from Rhodobacter capsulatus (Rhodopseudomonas capsulata).